Reading from the N-terminus, the 122-residue chain is Large ribosomal subunit protein uL14c (122 aa).

It belongs to the universal ribosomal protein uL14 family. In terms of assembly, part of the 50S ribosomal subunit.

Its subcellular location is the plastid. The protein resides in the chloroplast. Binds to 23S rRNA. This is Large ribosomal subunit protein uL14c from Nandina domestica (Heavenly bamboo).